Reading from the N-terminus, the 782-residue chain is DNA repair and recombination protein RAD54-like (782 aa).

Residues 1–20 (MRRSLAPSQRGGQRLSSRND) show a composition bias toward polar residues. The interval 1–28 (MRRSLAPSQRGGQRLSSRNDFTPPLLKK) is disordered. Residues 2-9 (RRSLAPSQ) form a required for chromatin remodeling, strand pairing activities and coupling of ATPase activity region. Thr-22 bears the Phosphothreonine mark. The region spanning 168 to 343 (EGKRGNFNGC…FSLVNFVNPE (176 aa)) is the Helicase ATP-binding domain. 181–188 (DEMGLGKT) is an ATP binding site. A DEGH box motif is present at residues 294-297 (DEGH). The 158-residue stretch at 501-658 (LLDFMLAAIR…NNESAEKHFT (158 aa)) folds into the Helicase C-terminal domain. Polar residues predominate over residues 741 to 753 (SQKIETTPATETS). A disordered region spans residues 741 to 782 (SQKIETTPATETSVEAKPEPERRKRPAMPLSDDSADEDFQGF). Acidic residues predominate over residues 773-782 (DSADEDFQGF).

It belongs to the SNF2/RAD54 helicase family. As to quaternary structure, interacts (via N-terminus) with spn-A/Rad51.

It localises to the nucleus. In terms of biological role, involved in mitotic DNA repair and meiotic recombination. Functions in the recombinational DNA repair pathway. Essential for interhomolog gene conversion (GC), but may have a less important role in intersister GC than spn-A/Rad51. In the presence of DNA, spn-A/Rad51 enhances the ATPase activity of okr/Rad54. In Drosophila pseudoobscura pseudoobscura (Fruit fly), this protein is DNA repair and recombination protein RAD54-like.